The chain runs to 3401 residues: Genome polyprotein (3401 aa).

Over 1-104 the chain is Cytoplasmic; that stretch reads MPVRPRNKPK…GRKKRRSMTH (104 aa). Residues 101–117 constitute a propeptide, ER anchor for the capsid protein C, removed in mature form by serine protease NS3; sequence SMTHGIILSLGVTMVIG. The chain crosses the membrane as a helical span at residues 105–125; the sequence is GIILSLGVTMVIGASLHHHGG. At 126 to 240 the chain is on the extracellular side; that stretch reads RYLLNVTHAD…GERQIQRIER (115 aa). N130 and N146 each carry an N-linked (GlcNAc...) asparagine; by host glycan. A helical membrane pass occupies residues 241-261; the sequence is WMMRNPFYAAISLLLAWWVGS. Over 262–266 the chain is Cytoplasmic; that stretch reads DIKQK. The helical transmembrane segment at 267–281 threads the bilayer; sequence VLIAFLVLAIGPAYS. At 282-725 the chain is on the extracellular side; that stretch reads THCVGIPKRD…HTVFGNVFHS (444 aa). Disulfide bonds link C284–C311, C355–C386, C373–C397, C462–C564, and C581–C611. Positions 379–392 are fusion peptide; it reads DRGWGNGCGLFGKG. Residues 726–746 traverse the membrane as a helical segment; it reads IFGGLSWITKIILGGMFLWLG. Residues 747-753 lie on the Extracellular side of the membrane; the sequence is VNSRNQT. A helical membrane pass occupies residues 754–774; it reads MCMVLMAVGGILLFMTLGVSG. Over 775-1122 the chain is Extracellular; that stretch reads EVGCSLDIKR…NVHEEHLVRS (348 aa). 6 cysteine pairs are disulfide-bonded: C778–C789, C829–C916, C952–C997, C1054–C1103, C1065–C1087, and C1086–C1090. 2 N-linked (GlcNAc...) asparagine; by host glycosylation sites follow: N904 and N981. Residues 1123–1143 form a helical membrane-spanning segment; sequence WASAGTGMAESSLGLVALFLF. Residues 1144–1198 are Cytoplasmic-facing; the sequence is TDIFARKRMTRKFMVIGCLGVLSVMIVGGFTALDLIRYIIVVGQHFASMNHGGDV. The chain crosses the membrane as a helical span at residues 1199–1219; the sequence is AYLAIIAVGKLRPGLLMMYSF. Topologically, residues 1220-1287 are lumenal; that stretch reads KAAWSPKERV…PILALLTPLS (68 aa). A helical membrane pass occupies residues 1288–1308; the sequence is MEIIRKTGIFACVGLLGLSLW. Over 1309-1352 the chain is Cytoplasmic; that stretch reads RGGDTTMRKGMPLLAGAATAASGLTRASLSVVFILCATAASRRS. A helical membrane pass occupies residues 1353 to 1373; that stretch reads WPIGEIMAIVGIVGTGFGMAV. The Lumenal segment spans residues 1374–1376; it reads NDQ. Residues 1377 to 1397 traverse the membrane as a helical segment; sequence ASLAGPMLVFGLIMIVYATLG. The Cytoplasmic portion of the chain corresponds to 1398-1447; sequence RADGLTLKRVGDITWEEEAVHSGSSTRYDVTLNEAGEFKLVHEEPVVWSH. The interval 1404–1443 is interacts with and activates NS3 protease; that stretch reads LKRVGDITWEEEAVHSGSSTRYDVTLNEAGEFKLVHEEPV. The segment at residues 1448-1468 is an intramembrane region (helical); sequence VVFLVVALIAASVHPIALVVV. Topologically, residues 1469–2154 are cytoplasmic; sequence TIIWTYGKKH…ASTNAPEAVT (686 aa). Residues 1481–1661 form the Peptidase S7 domain; the sequence is GGVLWDIPIA…GGEGVTEEPL (181 aa). Residues H1532, D1556, and S1617 each act as charge relay system; for serine protease NS3 activity in the active site. One can recognise a Helicase ATP-binding domain in the interval 1665–1821; the sequence is ATMLRKGKLT…ESNGEIEDLR (157 aa). An important for RNA-binding region spans residues 1669-1672; sequence RKGK. 1678–1685 is a binding site for ATP; it reads YHPGAGKT. The DEAH box signature appears at 1769–1772; the sequence is DEAH. The 180-residue stretch at 1816–1995 folds into the Helicase C-terminal domain; sequence EIEDLRRDIP…GMVAPLYDVE (180 aa). A helical membrane pass occupies residues 2155–2175; sequence ILLMTGIVVACTLGVGLAFMW. The Lumenal segment spans residues 2176-2181; the sequence is PKGVDK. The helical intramembrane region spans 2182–2200; it reads MSMGMITMSIAGYLMLQGG. A topological domain (lumenal) is located at residue L2201. A helical membrane pass occupies residues 2202–2222; that stretch reads TPVQVASVLLIFFIFMVVLIP. Residues 2223 to 2235 are Cytoplasmic-facing; the sequence is EAGTQRSINDNKT. A helical membrane pass occupies residues 2236–2250; it reads LYVLLGVALLIGAIT. Over 2251–2285 the chain is Cytoplasmic; the sequence is ANEMGYLEKTKRDLLGERVQNEWKLELPMFDLRPG. An intramembrane region (helical) is located at residues 2286 to 2306; the sequence is AAWSIYVGLATLVMPVLDHWI. The Lumenal portion of the chain corresponds to 2307–2354; it reads RTEYGSLSLTGIAQQASILQAMDKGVPFFKLNMSVIVLLVSVWNNFSM. Residues 2355 to 2375 traverse the membrane as a helical segment; sequence LSVLCGVGLLGVHCAFVLPGL. Topologically, residues 2376-2418 are cytoplasmic; sequence RAQAAKQAQRRVYHGVAKNPVVDGQTTAEIETAPEMPPLYEKK. Residues 2419–2439 traverse the membrane as a helical segment; sequence LALVLLGVVAIANGVMVRSAF. The Lumenal segment spans residues 2440–2467; it reads SMAETVVLLSAAVGPLLEGNTSAIWNGP. The chain crosses the membrane as a helical span at residues 2468-2488; that stretch reads MAVAMAGIMRGNYYAGIGLAY. At 2489-3401 the chain is on the cytoplasmic side; that stretch reads NLWILQSPKR…YSVQEVGTVL (913 aa). Residues 2499–2763 enclose the mRNA cap 0-1 NS5-type MT domain; sequence GRSTTMTLGE…DVVFPTGTRN (265 aa). S2554 contacts S-adenosyl-L-methionine. At S2554 the chain carries Phosphoserine. The active-site For 2'-O-MTase activity is the K2559. G2584, W2585, T2602, L2603, D2629, and V2630 together coordinate S-adenosyl-L-methionine. D2644 functions as the For 2'-O-MTase activity in the catalytic mechanism. S-adenosyl-L-methionine is bound at residue I2645. Catalysis depends on for 2'-O-MTase activity residues K2680 and E2716. Position 2718 (Y2718) interacts with S-adenosyl-L-methionine. The Nuclear localization signal motif lies at 2869 to 2902; it reads RAIMEVVNKWMFDFLAREKAPRICTKEEFINKVR. Zn(2+)-binding residues include E2936, H2940, C2945, and C2948. The region spanning 3026 to 3178 is the RdRp catalytic domain; the sequence is GIMYADDTAG…APLDERFGLA (153 aa). The Zn(2+) site is built by H3213, C3229, and C3348.

In the N-terminal section; belongs to the class I-like SAM-binding methyltransferase superfamily. mRNA cap 0-1 NS5-type methyltransferase family. Homodimer. Interacts (via N-terminus) with host EXOC1 (via C-terminus); this interaction results in EXOC1 degradation through the proteasome degradation pathway. As to quaternary structure, forms heterodimers with envelope protein E in the endoplasmic reticulum and Golgi. In terms of assembly, homodimer; in the endoplasmic reticulum and Golgi. Interacts with protein prM. Interacts with non-structural protein 1. Homodimer; Homohexamer when secreted. Interacts with envelope protein E. NS1 interacts with NS4B. Interacts with host complement protein CFH; this interaction leads to the degradation of C3. As to quaternary structure, interacts (via N-terminus) with serine protease NS3. In terms of assembly, forms a heterodimer with serine protease NS3. May form homooligomers. Forms a heterodimer with NS2B. Interacts with non-structural protein 2A (via N-terminus). Interacts with NS4B. Interacts with unphosphorylated RNA-directed RNA polymerase NS5; this interaction stimulates RNA-directed RNA polymerase NS5 guanylyltransferase activity. NS3 interacts with host PDCD6IP; this interaction contributes to virion release. As to quaternary structure, interacts with serine protease NS3. In terms of assembly, homodimer. Interacts with host STAT2; this interaction prevents the establishment of cellular antiviral state. Interacts with serine protease NS3. Interacts with host TRIM23; this interaction leads to NS5 ubiquitination. In terms of processing, specific enzymatic cleavages in vivo yield mature proteins. The nascent capsid protein C contains a C-terminal hydrophobic domain that act as a signal sequence for translocation of prM into the lumen of the ER. Mature capsid protein C is cleaved at a site upstream of this hydrophobic domain by NS3. prM is cleaved in post-Golgi vesicles by a host furin, releasing the mature small envelope protein M, and peptide pr. Non-structural protein 2A-alpha, a C-terminally truncated form of non-structural protein 2A, results from partial cleavage by NS3. Specific enzymatic cleavages in vivo yield mature proteins peptide 2K acts as a signal sequence and is removed from the N-terminus of NS4B by the host signal peptidase in the ER lumen. Signal cleavage at the 2K-4B site requires a prior NS3 protease-mediated cleavage at the 4A-2K site. Cleaved in post-Golgi vesicles by a host furin, releasing the mature small envelope protein M, and peptide pr. This cleavage is incomplete as up to 30% of viral particles still carry uncleaved prM. Post-translationally, N-glycosylated. In terms of processing, N-glycosylated. The excreted form is glycosylated and this is required for efficient secretion of the protein from infected cells. Polyubiquitinated; ubiquitination is probably mediated by host TRIM23 and is prerequisite for NS5-STAT2 interaction. NS5 is not ISGylated or sumoylated. Post-translationally, phosphorylated on serines residues. This phosphorylation may trigger NS5 nuclear localization.

It is found in the virion. It localises to the host nucleus. Its subcellular location is the host cytoplasm. The protein resides in the host perinuclear region. The protein localises to the virion membrane. It is found in the host endoplasmic reticulum membrane. It localises to the secreted. It carries out the reaction Selective hydrolysis of -Xaa-Xaa-|-Yaa- bonds in which each of the Xaa can be either Arg or Lys and Yaa can be either Ser or Ala.. The catalysed reaction is RNA(n) + a ribonucleoside 5'-triphosphate = RNA(n+1) + diphosphate. The enzyme catalyses a ribonucleoside 5'-triphosphate + H2O = a ribonucleoside 5'-diphosphate + phosphate + H(+). It catalyses the reaction ATP + H2O = ADP + phosphate + H(+). It carries out the reaction a 5'-end (5'-triphosphoguanosine)-ribonucleoside in mRNA + S-adenosyl-L-methionine = a 5'-end (N(7)-methyl 5'-triphosphoguanosine)-ribonucleoside in mRNA + S-adenosyl-L-homocysteine. The catalysed reaction is a 5'-end (N(7)-methyl 5'-triphosphoguanosine)-ribonucleoside in mRNA + S-adenosyl-L-methionine = a 5'-end (N(7)-methyl 5'-triphosphoguanosine)-(2'-O-methyl-ribonucleoside) in mRNA + S-adenosyl-L-homocysteine + H(+). Functionally, plays a role in virus budding by binding to the cell membrane and gathering the viral RNA into a nucleocapsid that forms the core of a mature virus particle. During virus entry, may induce genome penetration into the host cytoplasm after hemifusion induced by the surface proteins. Can migrate to the cell nucleus where it modulates host functions. Inhibits RNA silencing by interfering with host Dicer. Its function is as follows. Prevents premature fusion activity of envelope proteins in trans-Golgi by binding to envelope protein E at pH6.0. After virion release in extracellular space, gets dissociated from E dimers. In terms of biological role, acts as a chaperone for envelope protein E during intracellular virion assembly by masking and inactivating envelope protein E fusion peptide. prM is the only viral peptide matured by host furin in the trans-Golgi network probably to avoid catastrophic activation of the viral fusion activity in acidic Golgi compartment prior to virion release. prM-E cleavage is inefficient, and many virions are only partially matured. These uncleaved prM would play a role in immune evasion. Functionally, may play a role in virus budding. Exerts cytotoxic effects by activating a mitochondrial apoptotic pathway through M ectodomain. May display a viroporin activity. Binds to host cell surface receptor and mediates fusion between viral and cellular membranes. Envelope protein is synthesized in the endoplasmic reticulum in the form of heterodimer with protein prM. They play a role in virion budding in the ER, and the newly formed immature particle is covered with 60 spikes composed of heterodimer between precursor prM and envelope protein E. The virion is transported to the Golgi apparatus where the low pH causes dissociation of PrM-E heterodimers and formation of E homodimers. prM-E cleavage is inefficient, and many virions are only partially matured. These uncleaved prM would play a role in immune evasion. Its function is as follows. Involved in immune evasion, pathogenesis and viral replication. Once cleaved off the polyprotein, is targeted to three destinations: the viral replication cycle, the plasma membrane and the extracellular compartment. Essential for viral replication. Required for formation of the replication complex and recruitment of other non-structural proteins to the ER-derived membrane structures. Excreted as a hexameric lipoparticle that plays a role against host immune response. Antagonizing the complement function. Binds to the host macrophages and dendritic cells. Inhibits signal transduction originating from Toll-like receptor 3 (TLR3). In terms of biological role, component of the viral RNA replication complex that functions in virion assembly and antagonizes the host immune response. Functionally, required cofactor for the serine protease function of NS3. May have membrane-destabilizing activity and form viroporins. Displays three enzymatic activities: serine protease, NTPase and RNA helicase. NS3 serine protease, in association with NS2B, performs its autocleavage and cleaves the polyprotein at dibasic sites in the cytoplasm: C-prM, NS2A-NS2B, NS2B-NS3, NS3-NS4A, NS4A-2K and NS4B-NS5. NS3 RNA helicase binds RNA and unwinds dsRNA in the 3' to 5' direction. Also plays a role in virus assembly. Its function is as follows. Regulates the ATPase activity of the NS3 helicase activity. NS4A allows NS3 helicase to conserve energy during unwinding. In terms of biological role, functions as a signal peptide for NS4B and is required for the interferon antagonism activity of the latter. Functionally, induces the formation of ER-derived membrane vesicles where the viral replication takes place. Inhibits interferon (IFN)-induced host STAT1 phosphorylation and nuclear translocation, thereby preventing the establishment of cellular antiviral state by blocking the IFN-alpha/beta pathway. Replicates the viral (+) and (-) RNA genome, and performs the capping of genomes in the cytoplasm. NS5 methylates viral RNA cap at guanine N-7 and ribose 2'-O positions. Besides its role in RNA genome replication, also prevents the establishment of cellular antiviral state by blocking the interferon-alpha/beta (IFN-alpha/beta) signaling pathway. IFN-I induces binding of NS5 to host IFN-activated transcription factor STAT2, preventing its transcriptional activity. Host TRIM23 is the E3 ligase that interacts with and polyubiquitinates NS5 to promote its binding to STAT2 and trigger IFN-I signaling inhibition. This Edge Hill virus (EHV) protein is Genome polyprotein.